We begin with the raw amino-acid sequence, 263 residues long: MRKSLLALSLLAATSAPVLAADYSDGDIHKNDYKWMQFNLMGAFNELPGFPDGSNHDYLEMEFGGRSGIFDLYGYVDVFNLASDPGSDKSGKEKIFMKFAPRMSLDAVTGKDLSFGPVQELYVSTLMEWGGASEVNSQKIGLGSDVMVPWLGKIGLNLYGTYDSNKKDWNGYQISTNWFKPFYFFENGSFISYQGYIDWQFGMKDEYSSSSYGGAMFNGIYWHSDRFAVGYGLKGYKNIYGIKEVNGVDSTGFGHYIAVTYKF.

The first 20 residues, 1–20 (MRKSLLALSLLAATSAPVLA), serve as a signal peptide directing secretion.

The protein belongs to the nucleoside-specific channel-forming outer membrane porin (Tsx) (TC 1.B.10) family.

The protein resides in the cell outer membrane. Functionally, serves as receptor for a broad-host-range vibriophage, KVP40. The polypeptide is Outer membrane protein OmpK (Vibrio parahaemolyticus).